We begin with the raw amino-acid sequence, 637 residues long: Chaperone protein HtpG (637 aa).

Positions 1–345 (MSQQETHGFQ…SNDLPLNVSR (345 aa)) are a; substrate-binding. The b stretch occupies residues 346 to 562 (EILQDNQVTT…EGEMSTQMIK (217 aa)). The tract at residues 563–637 (LMQAAGQAVP…MNQMLLANAK (75 aa)) is c.

The protein belongs to the heat shock protein 90 family. In terms of assembly, homodimer.

The protein localises to the cytoplasm. Molecular chaperone. Has ATPase activity. The protein is Chaperone protein HtpG of Shewanella denitrificans (strain OS217 / ATCC BAA-1090 / DSM 15013).